The primary structure comprises 412 residues: Peptidyl-prolyl cis-trans isomerase FKBP8 (412 aa).

The segment at methionine 1–glutamine 68 is disordered. Acidic residues predominate over residues glutamate 22–serine 50. The PPIase FKBP-type domain maps to glycine 120–valine 204. Ca(2+) is bound by residues aspartate 149 and aspartate 151. Residues alanine 221–serine 254 form a TPR 1 repeat. Residues lysine 249, lysine 271, lysine 273, and lysine 284 each participate in a glycyl lysine isopeptide (Lys-Gly) (interchain with G-Cter in ubiquitin) cross-link. 2 TPR repeats span residues valine 272 to asparagine 305 and isoleucine 306 to asparagine 339. The residue at position 296 (serine 296) is a Phosphoserine. Residues lysine 307, lysine 314, lysine 334, lysine 340, lysine 348, lysine 351, and lysine 352 each participate in a glycyl lysine isopeptide (Lys-Gly) (interchain with G-Cter in ubiquitin) cross-link. A helical membrane pass occupies residues tryptophan 390 to alanine 410.

Homomultimers or heteromultimers (Potential). Forms heterodimer with calmodulin. When activated by calmodulin and calcium, interacts with the BH4 domain of BCL2 and weakly with BCL2L1/BCLX isoform Bcl-X(L). Does not bind and inhibit calcineurin. Interacts with ZFYVE27; may negatively regulate ZFYVE27 phosphorylation. As to quaternary structure, (Microbial infection) Interacts with hepatitis C/HCV protein NS5A. The cofactor is Ca(2+). Ubiquitinated by PRKN during mitophagy, leading to its degradation and enhancement of mitophagy. Deubiquitinated by USP30. As to expression, widely expressed. Highest levels seen in the brain. Highly abundant in the retina.

The protein localises to the mitochondrion. Its subcellular location is the mitochondrion membrane. It carries out the reaction [protein]-peptidylproline (omega=180) = [protein]-peptidylproline (omega=0). Constitutively inactive PPiase, which becomes active when bound to calmodulin and calcium. Seems to act as a chaperone for BCL2, targets it to the mitochondria and modulates its phosphorylation state. The BCL2/FKBP8/calmodulin/calcium complex probably interferes with the binding of BCL2 to its targets. The active form of FKBP8 may therefore play a role in the regulation of apoptosis. Involved in the inhibition of viral infection by influenza A viruses (IAV). This chain is Peptidyl-prolyl cis-trans isomerase FKBP8 (FKBP8), found in Homo sapiens (Human).